The primary structure comprises 679 residues: Glycine--tRNA ligase beta subunit (679 aa).

The protein belongs to the class-II aminoacyl-tRNA synthetase family. Tetramer of two alpha and two beta subunits.

It is found in the cytoplasm. It catalyses the reaction tRNA(Gly) + glycine + ATP = glycyl-tRNA(Gly) + AMP + diphosphate. This chain is Glycine--tRNA ligase beta subunit, found in Streptococcus gordonii (strain Challis / ATCC 35105 / BCRC 15272 / CH1 / DL1 / V288).